Reading from the N-terminus, the 1905-residue chain is Microtubule cross-linking factor 1 (1905 aa).

The segment at 1 to 249 (METLNGPAGG…SSDREPPRGA (249 aa)) is necessary for colocalization and binding with microtubules. The interval 1-329 (METLNGPAGG…SLGEQSRLVP (329 aa)) is disordered. Positions 1-508 (METLNGPAGG…QDDSADLRCQ (508 aa)) are necessary for self-assembly, microtubule bundling activity and apicobasal microtubule organization. Positions 22-40 (QHHRHHHLHPVAERRRLHR) are enriched in basic residues. Composition is skewed to low complexity over residues 63–95 (VPSS…AAPG) and 115–130 (AGAR…LGSR). 2 positions are modified to phosphoserine: S77 and S87. Residues S217, S221, and S263 each carry the phosphoserine modification. Positions 268-283 (ALLAAPLAAGACPGGR) are enriched in low complexity. 3 coiled-coil regions span residues 330–404 (AAEE…EQKS), 432–483 (SVRL…SSLK), and 513–718 (KEEA…LQHE). Disordered stretches follow at residues 544-563 (YGDV…PSTR), 601-631 (DMRG…LESS), 671-694 (FEPP…GAPL), 737-800 (LRAP…SEPC), and 842-867 (AGLR…GDQQ). Position 549 is a phosphoserine (S549). Positions 601 to 616 (DMRGQQEREGPGRDHA) are enriched in basic and acidic residues. S618 is modified (phosphoserine). T621 carries the post-translational modification Phosphothreonine. A compositionally biased stretch (gly residues) spans 680–692 (LGEGASPGAGGGA). Residue S685 is modified to Phosphoserine. The span at 741–770 (SPRDSDAESDAGKKESDGEESRLPQPKREG) shows a compositional bias: basic and acidic residues. S776 carries the post-translational modification Phosphoserine. The span at 857–866 (GEEEQGEGDQ) shows a compositional bias: acidic residues. Phosphoserine occurs at positions 901, 923, 941, and 975. A disordered region spans residues 1080-1100 (GVQGGHQADGPDHDSDRGCGF). 2 coiled-coil regions span residues 1143-1201 (KALL…ELGS) and 1238-1278 (EKNW…KENS). The tract at residues 1265–1382 (EFLWRIEQLQ…EENHKGNLQR (118 aa)) is necessary for interaction with MARK2 and apicobasal microtubule bundle formation in polarized epithelial cells. Phosphoserine is present on S1278. Residues 1346–1384 (ALSLDDEPEEPPAHRPEREFRNRLPEEEENHKGNLQRAV) form a disordered region. Positions 1356 to 1377 (PPAHRPEREFRNRLPEEEENHK) are enriched in basic and acidic residues. Phosphoserine occurs at positions 1385, 1388, and 1399. Residue T1417 is modified to Phosphothreonine. Position 1421 is a phosphoserine (S1421). A Phosphotyrosine modification is found at Y1427. The segment at 1485 to 1505 (DTMTSPEHCQKQPLRSHVLTE) is disordered. A phosphoserine mark is found at S1514, S1523, S1561, S1578, S1583, S1592, and S1661. The interval 1524–1569 (ITAAGGEGPFPTSRARGSPGDTKGGPPEPMLSRWPCTSPRHSRDYV) is disordered. Disordered stretches follow at residues 1655–1689 (GSGV…SRQV), 1707–1756 (PKYG…PVHT), 1782–1842 (GLRA…APPG), and 1863–1905 (KEER…PWGL). Phosphothreonine is present on residues T1667 and T1675. The segment covering 1678–1687 (SSPSRSLRSR) has biased composition (low complexity). Residues 1678-1773 (SSPSRSLRSR…SLFNIIDHSP (96 aa)) form a necessary for colocalization and binding with microtubules region. 2 positions are modified to phosphoserine: S1679 and S1683. Polar residues predominate over residues 1744–1756 (ARSTTTRESPVHT). 4 positions are modified to phosphoserine: S1791, S1808, S1812, and S1814.

Belongs to the SOGA family. Homodimer. Associates (via N- and C-terminus domains) with microtubule filaments. As to quaternary structure, interacts with MARK2; the interaction is direct. Phosphorylated during mitosis in a CDK1-dependent manner.

The protein resides in the lateral cell membrane. It localises to the apical cell membrane. The protein localises to the cytoplasm. It is found in the cytoskeleton. Its subcellular location is the spindle pole. The protein resides in the midbody. In terms of biological role, microtubule-associated factor involved in the late phase of epithelial polarization and microtubule dynamics regulation. Plays a role in the development and maintenance of non-centrosomal microtubule bundles at the lateral membrane in polarized epithelial cells. Required for faithful chromosome segregation during mitosis. This chain is Microtubule cross-linking factor 1 (MTCL1), found in Homo sapiens (Human).